A 213-amino-acid chain; its full sequence is Putative manganese efflux pump MntP (213 aa).

Helical transmembrane passes span 6–26, 34–54, 58–78, 107–127, 132–152, 153–173, and 192–212; these read LGVL…GIGM, AFML…FGIL, ALGL…LFFL, GSGG…LFAP, LVVI…SLGT, VGAQ…IMTV, and LAGG…SASP.

It belongs to the MntP (TC 9.B.29) family.

It localises to the cell membrane. Functionally, probably functions as a manganese efflux pump. This is Putative manganese efflux pump MntP from Heliobacterium modesticaldum (strain ATCC 51547 / Ice1).